The sequence spans 111 residues: Probable 4-amino-4-deoxy-L-arabinose-phosphoundecaprenol flippase subunit ArnE (111 aa).

3 helical membrane passes run 39 to 59 (WLAI…WVLQ), 61 to 81 (VPVG…TLAA), and 89 to 109 (VSLR…CMGV). Residues 40-109 (LAISLLLLGG…IVAGVMCMGV (70 aa)) form the EamA domain.

The protein belongs to the ArnE family. Heterodimer of ArnE and ArnF.

The protein localises to the cell inner membrane. The protein operates within bacterial outer membrane biogenesis; lipopolysaccharide biosynthesis. Its function is as follows. Translocates 4-amino-4-deoxy-L-arabinose-phosphoundecaprenol (alpha-L-Ara4N-phosphoundecaprenol) from the cytoplasmic to the periplasmic side of the inner membrane. This is Probable 4-amino-4-deoxy-L-arabinose-phosphoundecaprenol flippase subunit ArnE from Sodalis glossinidius (strain morsitans).